We begin with the raw amino-acid sequence, 192 residues long: UPF0312 protein plu2095 (192 aa).

Residues 1-23 form the signal peptide; sequence MLKKTLLGLTAGALLLNASSALA.

It belongs to the UPF0312 family. Type 1 subfamily.

It is found in the periplasm. The chain is UPF0312 protein plu2095 from Photorhabdus laumondii subsp. laumondii (strain DSM 15139 / CIP 105565 / TT01) (Photorhabdus luminescens subsp. laumondii).